A 299-amino-acid polypeptide reads, in one-letter code: MATH domain and coiled-coil domain-containing protein At2g42460 (299 aa).

An MATH domain is found at Gln-7–Ile-130. Residues Phe-225 to Gln-262 are a coiled coil.

This is MATH domain and coiled-coil domain-containing protein At2g42460 from Arabidopsis thaliana (Mouse-ear cress).